The sequence spans 178 residues: Phosphopantetheine adenylyltransferase (178 aa).

A substrate-binding site is contributed by threonine 17. Residues 17-18 (TF) and histidine 25 each bind ATP. Positions 49, 86, and 100 each coordinate substrate. ATP contacts are provided by residues 101-103 (GLR), glutamate 111, and 136-142 (LQPVASR).

It belongs to the bacterial CoaD family. Homohexamer. Requires Mg(2+) as cofactor.

The protein localises to the cytoplasm. The catalysed reaction is (R)-4'-phosphopantetheine + ATP + H(+) = 3'-dephospho-CoA + diphosphate. It participates in cofactor biosynthesis; coenzyme A biosynthesis; CoA from (R)-pantothenate: step 4/5. Functionally, reversibly transfers an adenylyl group from ATP to 4'-phosphopantetheine, yielding dephospho-CoA (dPCoA) and pyrophosphate. In Zymomonas mobilis subsp. mobilis (strain ATCC 31821 / ZM4 / CP4), this protein is Phosphopantetheine adenylyltransferase.